The sequence spans 1278 residues: MNGDGAREGDSVSHEPSTSKSPKEGEETKKEEKSEEKANTVPFYKLFAFADSSDVLLMICGSIGAIGNGMSLPFMTLLFGDLIDSFGKNQNNKDIVDVVSKVCLKFVYLGLGTLGAAFLQVACWMITGERQAARIRSTYLKTILRQDIGFFDVETNTGEVVGRMSGDTVLIQDAMGEKVGKFIQLVSTFVGGFVLAFIKGWLLTLVMLTSIPLLAMAGAAMALIVTRASSRGQAAYAKAATVVEQTIGSIRTVASFTGEKQAINSYKKFITSAYKSSIQQGFSTGLGLGVMFFVFFSSYALAIWFGGKMILEKGYTGGAVINVIIIVVAGSMSLGQTSPCVTAFAAGQAAAYKMFETIKRKPLIDAYDVNGKVLEDIRGDIELKDVHFSYPARPDEEIFDGFSLFIPSGATAALVGESGSGKSTVISLIERFYDPKSGAVLIDGVNLKEFQLKWIRSKIGLVSQEPVLFSSSIMENIAYGKENATVEEIKAATELANAAKFIDKLPQGLDTMVGEHGTQLSGGQKQRIAIARAILKDPRILLLDEATSALDAESERVVQEALDRVMVNRTTVIVAHRLSTVRNADMIAVIHRGKMVEKGSHSELLKDSEGAYSQLIRLQEINKDVKTSELSSGSSFRNSNLKKSMEGTSSVGNSSRHHSLNVLGLTTGLDLGSHSQRAGQDETGTASQEPLPKVSLTRIAALNKPEIPVLLLGTVAAAINGAIFPLFGILISRVIEAFFKPAHELKRDSRFWAIIFVALGVTSLIVSPTQMYLFAVAGGKLIRRIRSMCFEKAVHMEVAWFDEPQNSSGTMGARLSADATLIRALVGDALSLAVQNVASAASGLIIAFTASWELALIILVMLPLIGINGFVQVKFMKGFSADAKSKYEEASQVANDAVGSIRTVASFCAEEKVMQMYKKQCEGPIKDGIKQGFISGLGFGFSFFILFCVYATSFYAGARLVEDGKTTFNNVFQVFFALTMAAIGISQSSTFAPDSSKAKVAAASIFAIIDRKSKIDSSDETGTVLENVKGDIELRHLSFTYPARPDIQIFRDLCLTIRAGKTVALVGESGSGKSTVISLLQRFYDPDSGHITLDGVELKKLQLKWLRQQMGLVGQEPVLFNDTIRANIAYGKGSEEAATESEIIAAAELANAHKFISSIQQGYDTVVGERGIQLSGGQKQRVAIARAIVKEPKILLLDEATSALDAESERVVQDALDRVMVNRTTIVVAHRLSTIKNADVIAVVKNGVIAEKGTHETLIKIEGGVYASLVQLHMTASN.

Basic and acidic residues-rich tracts occupy residues 1–13 (MNGD…DSVS) and 21–35 (SPKE…EKSE). Residues 1 to 35 (MNGDGAREGDSVSHEPSTSKSPKEGEETKKEEKSE) form a disordered region. 6 helical membrane-spanning segments follow: residues 55-75 (VLLM…LPFM), 106-126 (FVYL…CWMI), 182-202 (FIQL…KGWL), 205-225 (LVML…ALIV), 285-305 (GLGL…AIWF), and 314-334 (GYTG…SMSL). The ABC transmembrane type-1 1 domain occupies 58 to 346 (MICGSIGAIG…TSPCVTAFAA (289 aa)). Residues 381–617 (IELKDVHFSY…SEGAYSQLIR (237 aa)) form the ABC transporter 1 domain. 416–423 (GESGSGKS) lines the ATP pocket. Residues Asn483, Asn568, and Asn653 are each glycosylated (N-linked (GlcNAc...) asparagine). A compositionally biased stretch (polar residues) spans 629-654 (ELSSGSSFRNSNLKKSMEGTSSVGNS). A disordered region spans residues 629–656 (ELSSGSSFRNSNLKKSMEGTSSVGNSSR). One can recognise an ABC transmembrane type-1 2 domain in the interval 710 to 997 (LLLGTVAAAI…SSTFAPDSSK (288 aa)). Transmembrane regions (helical) follow at residues 711-731 (LLGT…GILI) and 751-771 (FWAI…PTQM). A glycan (N-linked (GlcNAc...) asparagine) is linked at Asn806. 4 consecutive transmembrane segments (helical) span residues 824–844 (ALVG…ASGL), 845–865 (IIAF…LPLI), 932–952 (GFIS…VYAT), and 971–991 (VFQV…SSTF). An ABC transporter 2 domain is found at 1032 to 1271 (IELRHLSFTY…EGGVYASLVQ (240 aa)). 1067–1074 (GESGSGKS) provides a ligand contact to ATP. Residues Asn1121 and Asn1222 are each glycosylated (N-linked (GlcNAc...) asparagine).

It belongs to the ABC transporter superfamily. ABCB family. Multidrug resistance exporter (TC 3.A.1.201) subfamily. Present in roots and flower buds.

It is found in the membrane. It catalyses the reaction (indol-3-yl)acetate(in) + ATP + H2O = (indol-3-yl)acetate(out) + ADP + phosphate + H(+). Involved in the regulation of auxin transport required for pistil elongation. This chain is ABC transporter B family member 11, found in Arabidopsis thaliana (Mouse-ear cress).